Consider the following 293-residue polypeptide: 4-hydroxy-tetrahydrodipicolinate synthase (293 aa).

T46 contacts pyruvate. The active-site Proton donor/acceptor is the Y133. Residue K161 is the Schiff-base intermediate with substrate of the active site. V202 lines the pyruvate pocket.

It belongs to the DapA family. Homotetramer; dimer of dimers.

Its subcellular location is the cytoplasm. It carries out the reaction L-aspartate 4-semialdehyde + pyruvate = (2S,4S)-4-hydroxy-2,3,4,5-tetrahydrodipicolinate + H2O + H(+). The protein operates within amino-acid biosynthesis; L-lysine biosynthesis via DAP pathway; (S)-tetrahydrodipicolinate from L-aspartate: step 3/4. Catalyzes the condensation of (S)-aspartate-beta-semialdehyde [(S)-ASA] and pyruvate to 4-hydroxy-tetrahydrodipicolinate (HTPA). The sequence is that of 4-hydroxy-tetrahydrodipicolinate synthase from Wolbachia pipientis subsp. Culex pipiens (strain wPip).